Reading from the N-terminus, the 841-residue chain is MFALVLAVVILPLWTTANKSYVTPTPATRSIGHMSALLREYSDRNMSLKLEAFYPTGFDEELIKSLHWGNDRKHVFLVIVKVNPTTHEGDVGLVIFPKYLLSPYHFKAEHRAPFPAGRFGFLSHPVTPDVSFFDSSFAPYLTTQHLVAFTTFPPNPLVWHLERAETAATAERPFGVSLLPARPTVPKNTILEHKAHFATWDALARHTFFSAEAIITNSTLRIHVPLFGSVWPIRYWATGSVLLTSDSGRVEVNIGVGFMSSLISLSSGPPIELIVVPHTVKLNAVTSDTTWFQLNPPGPDPGPSYRVYLLGRGLDMNFSKHATVDICAYPEESLDYRYHLSMAHTEALRMTTKADQHDINEESYYHIAARIATSIFALSEMGRTTEYFLLDEIVDVQYQLKFLNYILMRIGAGAHPNTISGTSDLIFADPSQLHDELSLLFGQVKPANVDYFISYDEARDQLKTAYALSRGQDHVNALSLARRVIMSIYKGLLVKQNLNATERQALFFASMILLNFREGLENSSRVLDGRTTLLLMTSMCTAAHATQAALNIQEGLAYLNPSKHMFTIPNVYSPCMGSLRTDLTEEIHVMNLLSAIPTRPGLNEVLHTQLDESEIFDAAFKTMMIFTTWTAKDLHILHTHVPEVFTCQDAAARNGEYVLILPAVQGHSYVITRNKPQRGLVYSLADVDVYNPISVVYLSRDTCVSEHGVIETVALPHPDNLKECLYCGSVFLRYLTTGAIMDIIIIDSKDTERQLAAMGNSTIPPFNPDMHGDDSKAVLLFPNGTVVTLLGFERRQAIRMSGQYLGASLGGAFLAVVGFGIIGWMLCGNSRLREYNKIPLT.

Residues 1–17 form the signal peptide; sequence MFALVLAVVILPLWTTA. 3 N-linked (GlcNAc...) asparagine; by host glycosylation sites follow: N18, N45, and N217. The Virion surface portion of the chain corresponds to 18–802; it reads NKSYVTPTPA…ERRQAIRMSG (785 aa). The tract at residues 246-309 is interaction with gL; it reads DSGRVEVNIG…DPGPSYRVYL (64 aa). N317, N499, N522, N760, and N783 each carry an N-linked (GlcNAc...) asparagine; by host glycan. The helical transmembrane segment at 803–823 threads the bilayer; sequence QYLGASLGGAFLAVVGFGIIG. Topologically, residues 824 to 841 are intravirion; that stretch reads WMLCGNSRLREYNKIPLT.

The protein belongs to the herpesviridae glycoprotein H family. As to quaternary structure, interacts with glycoprotein L (gL); this interaction is necessary for the correct processing and cell surface expression of gH. The heterodimer gH/gL seems to interact with gB trimers during fusion. N-glycosylated, O-glycosylated, and sialylated.

It localises to the virion membrane. Its subcellular location is the host cell membrane. It is found in the host endosome membrane. In terms of biological role, the heterodimer glycoprotein H-glycoprotein L is required for the fusion of viral and plasma membranes leading to virus entry into the host cell. Following initial binding to host receptor, membrane fusion is mediated by the fusion machinery composed of gB and the heterodimer gH/gL. May also be involved in the fusion between the virion envelope and the outer nuclear membrane during virion morphogenesis. This Varicella-zoster virus (strain Dumas) (HHV-3) protein is Envelope glycoprotein H.